The following is a 618-amino-acid chain: Keratin, type I cytoskeletal 9 (618 aa).

The segment at 1 to 49 is disordered; that stretch reads MSFRQISSSFRSSSGSSCGGGGGRGASRGSMRSSFGRSSRAGGESRFGS. The tract at residues 1 to 137 is head; it reads MSFRQISSSF…GGEGSILNTN (137 aa). Positions 7–16 are enriched in low complexity; it reads SSSFRSSSGS. Phosphoserine is present on residues Ser14 and Ser17. Residues 17 to 26 show a composition bias toward gly residues; the sequence is SCGGGGGRGA. Residues 27–49 show a composition bias toward low complexity; that stretch reads SRGSMRSSFGRSSRAGGESRFGS. Residues 138–173 are coil 1A; that stretch reads EKVVMQNLNSRLASYMDKVQELEEDNANLEKQIQEW. Residues 138–450 form the IF rod domain; the sequence is EKVVMQNLNS…KLLEGGQQDF (313 aa). A linker 1 region spans residues 174 to 192; it reads YSRKGNRVFQKDYSHYYNT. The interval 193 to 284 is coil 1B; sequence IEDLKDRIVD…KSHKEEMNQL (92 aa). Residues 285–307 form a linker 12 region; it reads TGLNDGDVNVEINVAPSTDLTQV. The interval 308–446 is coil 2; sequence LNDMREEYEH…ETYRKLLEGG (139 aa). A tail region spans residues 447 to 609; sequence QQDFESSGAG…GGGNTRPSQS (163 aa). A disordered region spans residues 449–618; it reads DFESSGAGQI…SQSSQIPRLR (170 aa). The span at 456–603 shows a compositional bias: gly residues; it reads GQIGFGSGKG…GSGGSYGGGN (148 aa). The span at 607–618 shows a compositional bias: low complexity; the sequence is SQSQSSQIPRLR.

Belongs to the intermediate filament family. As to quaternary structure, heterotetramer of two type I and two type II keratins. In terms of tissue distribution, expressed in the perinuclear ring of spermatid manchettes within testis and in keratinocytes of the suprabasal layer of footpad epidermis (at protein level).

Functionally, may serve an important special function either in the mature palmar and plantar skin tissue or in the morphogenetic program of the formation of these tissues. Plays a role in keratin filament assembly. May be involved in spermatid nuclear shaping and sperm development. This chain is Keratin, type I cytoskeletal 9 (Krt9), found in Rattus norvegicus (Rat).